A 145-amino-acid polypeptide reads, in one-letter code: D-aminoacyl-tRNA deacylase (145 aa).

Residues 137–138 (GP) carry the Gly-cisPro motif, important for rejection of L-amino acids motif.

The protein belongs to the DTD family. Homodimer.

The protein resides in the cytoplasm. The enzyme catalyses glycyl-tRNA(Ala) + H2O = tRNA(Ala) + glycine + H(+). It catalyses the reaction a D-aminoacyl-tRNA + H2O = a tRNA + a D-alpha-amino acid + H(+). Its function is as follows. An aminoacyl-tRNA editing enzyme that deacylates mischarged D-aminoacyl-tRNAs. Also deacylates mischarged glycyl-tRNA(Ala), protecting cells against glycine mischarging by AlaRS. Acts via tRNA-based rather than protein-based catalysis; rejects L-amino acids rather than detecting D-amino acids in the active site. By recycling D-aminoacyl-tRNA to D-amino acids and free tRNA molecules, this enzyme counteracts the toxicity associated with the formation of D-aminoacyl-tRNA entities in vivo and helps enforce protein L-homochirality. The polypeptide is D-aminoacyl-tRNA deacylase (Escherichia coli O7:K1 (strain IAI39 / ExPEC)).